A 91-amino-acid polypeptide reads, in one-letter code: Small ribosomal subunit protein uS19 (91 aa).

Belongs to the universal ribosomal protein uS19 family.

Protein S19 forms a complex with S13 that binds strongly to the 16S ribosomal RNA. The chain is Small ribosomal subunit protein uS19 from Lactobacillus delbrueckii subsp. bulgaricus (strain ATCC 11842 / DSM 20081 / BCRC 10696 / JCM 1002 / NBRC 13953 / NCIMB 11778 / NCTC 12712 / WDCM 00102 / Lb 14).